A 514-amino-acid polypeptide reads, in one-letter code: Arabinose import ATP-binding protein AraG (514 aa).

ABC transporter domains lie at 16-251 and 251-507; these read LRFN…MVGR and RDIQ…LPRH. ATP is bound at residue 48 to 55; sequence GENGAGKS.

The protein belongs to the ABC transporter superfamily. Arabinose importer (TC 3.A.1.2.2) family. In terms of assembly, the complex is composed of two ATP-binding proteins (AraG), two transmembrane proteins (AraH) and a solute-binding protein (AraF).

It localises to the cell inner membrane. It catalyses the reaction L-arabinose(out) + ATP + H2O = L-arabinose(in) + ADP + phosphate + H(+). Its function is as follows. Part of the ABC transporter complex AraFGH involved in arabinose import. Responsible for energy coupling to the transport system. The sequence is that of Arabinose import ATP-binding protein AraG from Pseudomonas fluorescens (strain Pf0-1).